The chain runs to 535 residues: Aklavinone 12-hydroxylase RdmE (535 aa).

FAD contacts are provided by leucine 15, glycine 16, glutamate 35, glutamine 119, and leucine 143. Tyrosine 224 acts as the Proton acceptor in catalysis. Aspartate 308 is an FAD binding site. Glycine 317 provides a ligand contact to aklavinone.

Belongs to the PheA/TfdB FAD monooxygenase family. Monomer. FAD is required as a cofactor.

It carries out the reaction aklavinone + NADPH + O2 + H(+) = epsilon-rhodomycinone + NADP(+) + H2O. The protein operates within antibiotic biosynthesis; daunorubicin biosynthesis. It functions in the pathway antibiotic biosynthesis; carminomycin biosynthesis. It participates in antibiotic biosynthesis; rhodomycin biosynthesis. With respect to regulation, inhibited by phenylglyoxal and 2,3-butanedione. NADP provides a partial protection against inhibition by phenylglyoxal. Increasing the methanol concentration in the assay causes inhibition of the enzyme. In terms of biological role, involved in the biosynthesis of the anthracyclines carminomycin, rhodomycin and daunorubicin (daunomycin) which are aromatic polyketide antibiotics that exhibit high cytotoxicity and are widely applied in the chemotherapy of a variety of cancers. Catalyzes the incorporation of a hydroxyl group at position C-11 of aklavinone, resulting in epsilon-rhodomycinone. It cannot accept substrates glycosylated at position C-7 and is specific for the C-9R configuration of anthracyclines. It can use both NAD or NADP but it is slowly inactivated in the presence of NADH. This is Aklavinone 12-hydroxylase RdmE (rdmE) from Streptomyces purpurascens.